Reading from the N-terminus, the 270-residue chain is ATP synthase subunit a (270 aa).

The next 5 membrane-spanning stretches (helical) occupy residues 37 to 57, 98 to 118, 143 to 163, 217 to 237, and 239 to 259; these read NVHI…LWVF, VAPL…MDLI, DVNI…YYSI, VVFI…GALP, and AIFH…LTIV.

The protein belongs to the ATPase A chain family. F-type ATPases have 2 components, CF(1) - the catalytic core - and CF(0) - the membrane proton channel. CF(1) has five subunits: alpha(3), beta(3), gamma(1), delta(1), epsilon(1). CF(0) has three main subunits: a(1), b(2) and c(9-12). The alpha and beta chains form an alternating ring which encloses part of the gamma chain. CF(1) is attached to CF(0) by a central stalk formed by the gamma and epsilon chains, while a peripheral stalk is formed by the delta and b chains.

The protein resides in the cell inner membrane. In terms of biological role, key component of the proton channel; it plays a direct role in the translocation of protons across the membrane. The polypeptide is ATP synthase subunit a (Aliivibrio salmonicida (strain LFI1238) (Vibrio salmonicida (strain LFI1238))).